We begin with the raw amino-acid sequence, 409 residues long: Outer membrane protein YopM (409 aa).

15 LRR repeats span residues 72–91 (QAHE…ELPP), 92–113 (HLES…PQSL), 114–131 (KSLL…DLPP), 132–153 (LLEY…QNSS), 154–173 (FLKI…DLPP), 174–195 (SLEF…QNLP), 196–215 (FLTA…DLPL), 216–237 (SLES…QNLP), 238–257 (FLTT…DLPP), 258–279 (SLEA…PQSL), 280–297 (TFLD…ELPP), 298–317 (NLYY…DLPP), 318–339 (SLEE…PPRL), 340–357 (ERLI…ELPQ), and 358–379 (NLKQ…PESV). The Ca(2+) site is built by asparagine 246 and aspartate 266. The Ca(2+) site is built by asparagine 307, glutamate 308, and asparagine 326.

Belongs to the LRR-containing bacterial E3 ligase family. Homotetramer forming a hollow cylinder with an inner diameter of approximately 35 angstroms.

The protein localises to the cell outer membrane. It localises to the secreted. Effector proteins function to alter host cell physiology and promote bacterial survival in host tissues. This chain is Outer membrane protein YopM (yopM), found in Yersinia pestis.